Consider the following 367-residue polypeptide: MEAEDEYSAGCSFSLMCQEDSTDLDDDGGGGGCFAGDGRADLLLVYNAAAAADDEDEEEVEEYMDHLVSKESSFCSSSSSTSSSSCCFSDAGGESAAAAAPMDWFALARRATVKWILETRGCFGFCHRTAYLAIAYFDRFCLRRCIDRSVMPWAARLLAVACVSLAAKMEEYRAPALSEFRAGVGDDGYEFSCVCIRRMELLVLSTLDWRMAAVTPFDYLPCLSSRLRRHVGGGGGAGASAALIFSAAEAASVLDHRPSTVAAAAVLAATHGALTREALESKMSGLSPSFLLDKEDVFACYSAMLSQPTSPASKSTTTTTGKRSSSSSCSESTDAASSYDATAASFPAAASCGSKRMRLELPGGILR.

A disordered region spans residues 307–333; that stretch reads QPTSPASKSTTTTTGKRSSSSSCSEST.

It belongs to the cyclin family. Cyclin D subfamily.

This Oryza sativa subsp. japonica (Rice) protein is Cyclin-D5-1 (CYCD5-1).